Here is a 290-residue protein sequence, read N- to C-terminus: 4-hydroxy-tetrahydrodipicolinate synthase (290 aa).

Position 44 (T44) interacts with pyruvate. The active-site Proton donor/acceptor is the Y132. K160 (schiff-base intermediate with substrate) is an active-site residue. I202 lines the pyruvate pocket.

This sequence belongs to the DapA family. Homotetramer; dimer of dimers.

It localises to the cytoplasm. The enzyme catalyses L-aspartate 4-semialdehyde + pyruvate = (2S,4S)-4-hydroxy-2,3,4,5-tetrahydrodipicolinate + H2O + H(+). Its pathway is amino-acid biosynthesis; L-lysine biosynthesis via DAP pathway; (S)-tetrahydrodipicolinate from L-aspartate: step 3/4. Its function is as follows. Catalyzes the condensation of (S)-aspartate-beta-semialdehyde [(S)-ASA] and pyruvate to 4-hydroxy-tetrahydrodipicolinate (HTPA). In Citrifermentans bemidjiense (strain ATCC BAA-1014 / DSM 16622 / JCM 12645 / Bem) (Geobacter bemidjiensis), this protein is 4-hydroxy-tetrahydrodipicolinate synthase.